We begin with the raw amino-acid sequence, 287 residues long: ATP synthase gamma chain (287 aa).

The protein belongs to the ATPase gamma chain family. In terms of assembly, F-type ATPases have 2 components, CF(1) - the catalytic core - and CF(0) - the membrane proton channel. CF(1) has five subunits: alpha(3), beta(3), gamma(1), delta(1), epsilon(1). CF(0) has three main subunits: a, b and c.

Its subcellular location is the cell inner membrane. In terms of biological role, produces ATP from ADP in the presence of a proton gradient across the membrane. The gamma chain is believed to be important in regulating ATPase activity and the flow of protons through the CF(0) complex. The protein is ATP synthase gamma chain of Geobacter metallireducens (strain ATCC 53774 / DSM 7210 / GS-15).